We begin with the raw amino-acid sequence, 449 residues long: Hyaluronidase-4 (449 aa).

The signal sequence occupies residues 1-23; the sequence is MYHIWIKFLAAWIFLKRFNGVHV. Intrachain disulfides connect Cys47–Cys340 and Cys211–Cys227. Residues Asn67, Asn103, and Asn111 are each glycosylated (N-linked (GlcNAc...) asparagine). Catalysis depends on Glu135, which acts as the Proton donor. N-linked (GlcNAc...) asparagine glycosylation is present at Asn153. N-linked (GlcNAc...) asparagine glycosylation occurs at Asn357. 3 disulfides stabilise this stretch: Cys365–Cys376, Cys370–Cys427, and Cys429–Cys438. An N-linked (GlcNAc...) asparagine glycan is attached at Asn401. One can recognise an EGF-like domain in the interval 427–438; sequence CQCYQGWKGLYC.

The protein belongs to the glycosyl hydrolase 56 family. As to quaternary structure, monomer. Expressed by the venom gland.

It localises to the secreted. It catalyses the reaction Random hydrolysis of (1-&gt;4)-linkages between N-acetyl-beta-D-glucosamine and D-glucuronate residues in hyaluronate.. Its function is as follows. Snake venom endo-hyaluronidase that degrades hyaluronan to smaller oligosaccharide fragments. In venom, it is not toxic by itself, but increases the diffusion of other venom proteins by degrading the extracellular matrix. In addition, it displays antiedematogenic activity. The sequence is that of Hyaluronidase-4 from Cerastes cerastes (Horned desert viper).